The sequence spans 446 residues: N-succinylarginine dihydrolase (446 aa).

Substrate contacts are provided by residues 19-28 (AGLSFGNVAS), asparagine 110, and 137-138 (HR). The active site involves glutamate 174. Substrate is bound at residue arginine 213. Histidine 249 is a catalytic residue. Positions 251 and 364 each coordinate substrate. The Nucleophile role is filled by cysteine 370.

The protein belongs to the succinylarginine dihydrolase family. Homodimer.

The enzyme catalyses N(2)-succinyl-L-arginine + 2 H2O + 2 H(+) = N(2)-succinyl-L-ornithine + 2 NH4(+) + CO2. Its pathway is amino-acid degradation; L-arginine degradation via AST pathway; L-glutamate and succinate from L-arginine: step 2/5. Its function is as follows. Catalyzes the hydrolysis of N(2)-succinylarginine into N(2)-succinylornithine, ammonia and CO(2). The protein is N-succinylarginine dihydrolase of Burkholderia mallei (strain NCTC 10247).